The following is a 192-amino-acid chain: MAPTEITFVTGNANKLKEVQMLLAAEDKKGSITLKNEPLDLDELQDVDLKAIALTKCKQAVKELGVGTPVFVEDTALTFDEFNGLPGAYIKWFLKSMSLEKIVKLLEPYSNKGAEAITTIAYCDENGEYHIFQGITKGKIVDSRGPTNFGWDSIFEPLEGKGMTYAEMEKDFKNTLSHRGKAFVEFKKFLYA.

10–15 (TGNANK) is a binding site for ITP. Glu-43 contacts Mg(2+). ITP contacts are provided by residues Lys-56, 74–75 (DT), Lys-91, 149–152 (FGWD), Lys-173, and 178–179 (HR).

Belongs to the HAM1 NTPase family. As to quaternary structure, homodimer. Requires Mg(2+) as cofactor. Mn(2+) is required as a cofactor.

Its subcellular location is the cytoplasm. The protein resides in the nucleus. It carries out the reaction ITP + H2O = IMP + diphosphate + H(+). It catalyses the reaction dITP + H2O = dIMP + diphosphate + H(+). The enzyme catalyses XTP + H2O = XMP + diphosphate + H(+). Its function is as follows. Pyrophosphatase that hydrolyzes non-canonical purine nucleotides such as inosine triphosphate (ITP), deoxyinosine triphosphate (dITP) or xanthosine 5'-triphosphate (XTP) to their respective monophosphate derivatives. The enzyme does not distinguish between the deoxy- and ribose forms. Probably excludes non-canonical purines from RNA and DNA precursor pools, thus preventing their incorporation into RNA and DNA and avoiding chromosomal lesions. The chain is Inosine triphosphate pyrophosphatase from Candida glabrata (strain ATCC 2001 / BCRC 20586 / JCM 3761 / NBRC 0622 / NRRL Y-65 / CBS 138) (Yeast).